Here is a 357-residue protein sequence, read N- to C-terminus: RGG repeats nuclear RNA binding protein C (357 aa).

A2 carries the post-translational modification N-acetylalanine. A disordered region spans residues 25–232 (SQKVEKAAAA…AEEAEAREMT (208 aa)). The span at 31–45 (AAAAVQPPKAAKFPT) shows a compositional bias: low complexity. Composition is skewed to gly residues over residues 63–82 (GGRG…GNGG) and 114–128 (SRGG…GGGR). Residues 143 to 155 (DVERPPRNYDRHS) show a composition bias toward basic and acidic residues. Residues 159 to 172 (HGTGMKRNGGGRGN) show a composition bias toward gly residues. The segment covering 190-232 (EVEKSPVAEKQGGEDETPEAKKELTAEEKAQKEAEEAEAREMT) has biased composition (basic and acidic residues). Residues 239-299 (ILEEKKKALQ…KDATEKAKKS (61 aa)) enclose the FF domain. Positions 308 to 357 (PADGKRYNGRGGGSRGRGGRGGRGEGGNQRYAKEAAAPAIGDTAQFPSLG) are disordered. Residues 316–334 (GRGGGSRGRGGRGGRGEGG) show a composition bias toward gly residues. S355 carries the post-translational modification Phosphoserine.

This sequence belongs to the SERBP1-HABP4 family.

The protein localises to the nucleus. Its subcellular location is the cytoplasm. It is found in the perinuclear region. In terms of biological role, ribosome-binding protein that acts as a regulator of mRNA translation by promoting ribosome inactivation. Binds RNA. The chain is RGG repeats nuclear RNA binding protein C from Arabidopsis thaliana (Mouse-ear cress).